The sequence spans 267 residues: MRLIPLKNDQQVAKWAASYIAQRINQFKPSAERPFVLGLPTGGTPLQTYQELIKLYQAGEVSFKYVVTFNMDEYVGLAQDHPESYHSFMHNNFFKHIDIQAQNINILDGNTDDHQQECHRYEEKIKYYGKIHLFMGGVGIDGHIAFNEPASSLGSRTRIKTLTEDTLIANSRFFNNDISQVPKYALTIGVATLLDAEEIMLLITGYNKALALQAGVEGSVNHLWTVSALQLHERSIIVCDEPATQELKVKTVKYFTQLEAQEIASVC.

Residue aspartate 72 is the Proton acceptor; for enolization step of the active site. Aspartate 141 (for ring-opening step) is an active-site residue. Histidine 143 serves as the catalytic Proton acceptor; for ring-opening step. Glutamate 148 functions as the For ring-opening step in the catalytic mechanism.

This sequence belongs to the glucosamine/galactosamine-6-phosphate isomerase family. NagB subfamily. As to quaternary structure, homohexamer.

The catalysed reaction is alpha-D-glucosamine 6-phosphate + H2O = beta-D-fructose 6-phosphate + NH4(+). The protein operates within amino-sugar metabolism; N-acetylneuraminate degradation; D-fructose 6-phosphate from N-acetylneuraminate: step 5/5. With respect to regulation, allosterically activated by N-acetylglucosamine 6-phosphate (GlcNAc6P). In terms of biological role, catalyzes the reversible isomerization-deamination of glucosamine 6-phosphate (GlcN6P) to form fructose 6-phosphate (Fru6P) and ammonium ion. The sequence is that of Glucosamine-6-phosphate deaminase from Haemophilus ducreyi (strain 35000HP / ATCC 700724).